The chain runs to 78 residues: Small ribosomal subunit protein uS17 (78 aa).

This sequence belongs to the universal ribosomal protein uS17 family. Part of the 30S ribosomal subunit.

One of the primary rRNA binding proteins, it binds specifically to the 5'-end of 16S ribosomal RNA. This chain is Small ribosomal subunit protein uS17, found in Sinorhizobium fredii (strain NBRC 101917 / NGR234).